The following is a 335-amino-acid chain: MKSTSKIYTDKDSNLDVIKGKRIAVLGYGSQGRAWAQNLRDSGLNVVVGLEREGKSWELAKSDGIIPLHTKDAVKDADIIIFLVPDMVQRTLWLESVQPYMKKGADLVFAHGFNIHYKLIEPPKDSDVYMIAPKGPGPTVREYYKAGGGVPALVAIQQDVSGTALQKALAIAKGIGATRAGVIPTTFKEETETDLFGEQVILVGGIMELMKAAFETLVEEGYQPEVAYFETINELKMLVDLVYEKGITGMLKAVSDTAKYGGMTVGKFVINEDVRKRMKEALQRIKSGKFAEEWVEEYGRGMPTVVNGLSQVQNSLEEKIGNQLKDLIQKGKPKS.

In terms of domain architecture, KARI N-terminal Rossmann spans 5–185 (SKIYTDKDSN…GATRAGVIPT (181 aa)). NADP(+)-binding positions include 28-31 (YGSQ), S56, and 86-89 (DMVQ). H111 is a catalytic residue. Position 137 (G137) interacts with NADP(+). The KARI C-terminal knotted domain maps to 186-331 (TFKEETETDL…NQLKDLIQKG (146 aa)). D194, E198, E230, and E234 together coordinate Mg(2+). A substrate-binding site is contributed by S255.

This sequence belongs to the ketol-acid reductoisomerase family. Mg(2+) is required as a cofactor.

The enzyme catalyses (2R)-2,3-dihydroxy-3-methylbutanoate + NADP(+) = (2S)-2-acetolactate + NADPH + H(+). It carries out the reaction (2R,3R)-2,3-dihydroxy-3-methylpentanoate + NADP(+) = (S)-2-ethyl-2-hydroxy-3-oxobutanoate + NADPH + H(+). Its pathway is amino-acid biosynthesis; L-isoleucine biosynthesis; L-isoleucine from 2-oxobutanoate: step 2/4. It participates in amino-acid biosynthesis; L-valine biosynthesis; L-valine from pyruvate: step 2/4. Its function is as follows. Involved in the biosynthesis of branched-chain amino acids (BCAA). Catalyzes an alkyl-migration followed by a ketol-acid reduction of (S)-2-acetolactate (S2AL) to yield (R)-2,3-dihydroxy-isovalerate. In the isomerase reaction, S2AL is rearranged via a Mg-dependent methyl migration to produce 3-hydroxy-3-methyl-2-ketobutyrate (HMKB). In the reductase reaction, this 2-ketoacid undergoes a metal-dependent reduction by NADPH to yield (R)-2,3-dihydroxy-isovalerate. The chain is Ketol-acid reductoisomerase (NADP(+)) from Saccharolobus islandicus (strain M.16.27) (Sulfolobus islandicus).